The chain runs to 641 residues: Anthrax toxin receptor-like (641 aa).

The signal sequence occupies residues 1-27 (MMSHSPSMPCSALFLLLLLLLPPTFKG). The Extracellular portion of the chain corresponds to 28 to 363 (GSLRYHGPGW…ASQGIVFKRT (336 aa)). One can recognise a VWFA domain in the interval 76-247 (DLYLVLDKSG…SALEGVVDPL (172 aa)). 3 residues coordinate a divalent metal cation: Ser-84, Ser-86, and Thr-150. The helical transmembrane segment at 364–384 (WLMFLPVLLVTLLLLCCTWKL) threads the bilayer. Residues 385-641 (CIKPKKLPPP…FPPISKGPKF (257 aa)) lie on the Cytoplasmic side of the membrane. The interval 391-455 (LPPPPPKPEK…ARPPPAPLPA (65 aa)) is disordered. Positions 407 to 436 (PPPSSPPAPGRGPGPGPSAGPGPGPGPSPG) are enriched in pro residues.

Belongs to the ATR family.

It is found in the membrane. This is Anthrax toxin receptor-like (Antxrl) from Mus musculus (Mouse).